The chain runs to 90 residues: Co-chaperonin GroES (90 aa).

This sequence belongs to the GroES chaperonin family. As to quaternary structure, heptamer of 7 subunits arranged in a ring. Interacts with the chaperonin GroEL.

The protein resides in the cytoplasm. Together with the chaperonin GroEL, plays an essential role in assisting protein folding. The GroEL-GroES system forms a nano-cage that allows encapsulation of the non-native substrate proteins and provides a physical environment optimized to promote and accelerate protein folding. GroES binds to the apical surface of the GroEL ring, thereby capping the opening of the GroEL channel. In Bacteroides fragilis (strain ATCC 25285 / DSM 2151 / CCUG 4856 / JCM 11019 / LMG 10263 / NCTC 9343 / Onslow / VPI 2553 / EN-2), this protein is Co-chaperonin GroES.